Here is a 241-residue protein sequence, read N- to C-terminus: Endonuclease NucS (241 aa).

Belongs to the NucS endonuclease family.

Its subcellular location is the cytoplasm. In terms of biological role, cleaves both 3' and 5' ssDNA extremities of branched DNA structures. The protein is Endonuclease NucS of Corynebacterium jeikeium (strain K411).